The following is a 591-amino-acid chain: DNA ligase (591 aa).

Residues 38–42 (DEKYD), 87–88 (SL), and E119 contribute to the NAD(+) site. K121 functions as the N6-AMP-lysine intermediate in the catalytic mechanism. The NAD(+) site is built by R142, E181, K298, and K322. Zn(2+)-binding residues include C415, C418, C433, and C439.

The protein belongs to the NAD-dependent DNA ligase family. LigA subfamily. Requires Mg(2+) as cofactor. Mn(2+) is required as a cofactor.

It catalyses the reaction NAD(+) + (deoxyribonucleotide)n-3'-hydroxyl + 5'-phospho-(deoxyribonucleotide)m = (deoxyribonucleotide)n+m + AMP + beta-nicotinamide D-nucleotide.. In terms of biological role, DNA ligase that catalyzes the formation of phosphodiester linkages between 5'-phosphoryl and 3'-hydroxyl groups in double-stranded DNA using NAD as a coenzyme and as the energy source for the reaction. It is essential for DNA replication and repair of damaged DNA. The sequence is that of DNA ligase from Wigglesworthia glossinidia brevipalpis.